Consider the following 348-residue polypeptide: Protein-glutamate methylesterase/protein-glutamine glutaminase 2 (348 aa).

One can recognise a Response regulatory domain in the interval 5-122; sequence KVLIIDDSAL…DLGLSQYRDE (118 aa). Position 56 is a 4-aspartylphosphate (Asp-56). Residues 157–348 form the CheB-type methylesterase domain; sequence SLKTGFLCAI…AANIIKHALK (192 aa). Catalysis depends on residues Ser-169, His-195, and Asp-291.

Belongs to the CheB family. Post-translationally, phosphorylated by CheA. Phosphorylation of the N-terminal regulatory domain activates the methylesterase activity.

The protein resides in the cytoplasm. It catalyses the reaction [protein]-L-glutamate 5-O-methyl ester + H2O = L-glutamyl-[protein] + methanol + H(+). It carries out the reaction L-glutaminyl-[protein] + H2O = L-glutamyl-[protein] + NH4(+). In terms of biological role, involved in chemotaxis. Part of a chemotaxis signal transduction system that modulates chemotaxis in response to various stimuli. Catalyzes the demethylation of specific methylglutamate residues introduced into the chemoreceptors (methyl-accepting chemotaxis proteins or MCP) by CheR. Also mediates the irreversible deamidation of specific glutamine residues to glutamic acid. In Saccharophagus degradans (strain 2-40 / ATCC 43961 / DSM 17024), this protein is Protein-glutamate methylesterase/protein-glutamine glutaminase 2.